We begin with the raw amino-acid sequence, 359 residues long: Type-1 angiotensin II receptor (359 aa).

At 1–25 (MILNSSTEDSIKRIQDDCPKAGRHN) the chain is on the extracellular side. Asn-4 is a glycosylation site (N-linked (GlcNAc...) asparagine). 2 residues coordinate angiotensin II: Gln-15 and Asp-17. 2 disulfides stabilise this stretch: Cys-18–Cys-274 and Cys-101–Cys-180. Residues 26–55 (YIFVMIPTLYSIIFVVGIFGNSLVVIVIYF) form a helical membrane-spanning segment. The Cytoplasmic portion of the chain corresponds to 56 to 61 (YMKLKT). Residues 62–89 (VASVFLLNLALADLCFLLTLPLWAVYTA) form a helical membrane-spanning segment. Residues 90-98 (MEYRWPFGN) are Extracellular-facing. Residues 99-125 (YLCKIASASVSFNLYASVFLLTCLSID) form a helical membrane-spanning segment. The Cytoplasmic portion of the chain corresponds to 126 to 141 (RYLAIVHPMKSRLRRT). Residues 142 to 165 (MLVAKVTCIIIWLLAGLASLPTII) form a helical membrane-spanning segment. The Extracellular portion of the chain corresponds to 166-190 (HRNVFFIENTNITVCAFHYESQNST). Arg-167 provides a ligand contact to angiotensin II. Asn-176 carries N-linked (GlcNAc...) asparagine glycosylation. Residues Phe-182, His-183, and Tyr-184 each contribute to the angiotensin II site. Asn-188 is a glycosylation site (N-linked (GlcNAc...) asparagine). A helical membrane pass occupies residues 191–216 (LPVGLGLTKNILGFLFPFLIILTSYT). Lys-199 lines the angiotensin II pocket. Residues 217-239 (LIWKALKKAYEIQKNKPRNDDIF) lie on the Cytoplasmic side of the membrane. Residues 240–268 (KIIMAIVLFFFFSWVPHQIFTFLDVLIQL) traverse the membrane as a helical segment. Residues 269 to 278 (GIIHDCKIAD) are Extracellular-facing. A helical transmembrane segment spans residues 279–304 (IVDTAMPITICLAYFNNCLNPLFYGF). The Cytoplasmic portion of the chain corresponds to 305–359 (LGKKFKKYFLQLLKYIPPKAKSHSSLSTKMSTLSYRPSENGSSSTKKSAPCTEVE). The disordered stretch occupies residues 326 to 359 (SHSSLSTKMSTLSYRPSENGSSSTKKSAPCTEVE). The segment covering 327 to 351 (HSSLSTKMSTLSYRPSENGSSSTKK) has biased composition (polar residues). Residue Cys-355 is the site of S-palmitoyl cysteine attachment.

This sequence belongs to the G-protein coupled receptor 1 family. Interacts with MAS1. Interacts with ARRB1. Interacts with FLNA (via filamin repeat 21); increases PKA-mediated phosphorylation of FLNA. Post-translationally, C-terminal Ser or Thr residues may be phosphorylated.

The protein resides in the cell membrane. In terms of biological role, receptor for angiotensin II, a vasoconstricting peptide, which acts as a key regulator of blood pressure and sodium retention by the kidney. The activated receptor in turn couples to G-alpha proteins G(q) (GNAQ, GNA11, GNA14 or GNA15) and thus activates phospholipase C and increases the cytosolic Ca(2+) concentrations, which in turn triggers cellular responses such as stimulation of protein kinase C. This is Type-1 angiotensin II receptor (AGTR1) from Sus scrofa (Pig).